The primary structure comprises 355 residues: Poly(3-hydroxyalkanoate) polymerase subunit PhaC (355 aa).

Positions 69 to 334 (PLLIVYALVN…LAFPGGHIGI (266 aa)) constitute an AB hydrolase-1 domain. Residue cysteine 149 is part of the active site.

Belongs to the PHA/PHB synthase family. Type III PhaC subfamily. As to quaternary structure, a large complex of PhaC and PhaE; the ratio of the subunits has been estimated to be from 1:1 to 4:1, with more PhaE than PhaC.

The protein resides in the cytoplasm. The enzyme catalyses (3R)-3-hydroxybutanoyl-CoA + [(3R)-hydroxybutanoate](n) = [(3R)-hydroxybutanoate](n+1) + CoA. Its pathway is biopolymer metabolism; poly-(R)-3-hydroxybutanoate biosynthesis. Polymerizes D(-)-3-hydroxybutyryl-CoA to create polyhydroxybutyrate (PHB) which consists of thousands of hydroxybutyrate molecules linked end to end. This subunit has catalytic activity that is enhanced 100-fold by PhaE, the non-catalytic subunit. The sequence is that of Poly(3-hydroxyalkanoate) polymerase subunit PhaC from Allochromatium vinosum (strain ATCC 17899 / DSM 180 / NBRC 103801 / NCIMB 10441 / D) (Chromatium vinosum).